Reading from the N-terminus, the 153-residue chain is Ribonuclease H (153 aa).

An RNase H type-1 domain is found at 7-148; the sequence is PADLVEMWTD…ADMLANQGVA (142 aa). 4 residues coordinate Mg(2+): Asp16, Glu54, Asp76, and Asp140.

Belongs to the RNase H family. In terms of assembly, monomer. Requires Mg(2+) as cofactor.

It is found in the cytoplasm. The catalysed reaction is Endonucleolytic cleavage to 5'-phosphomonoester.. In terms of biological role, endonuclease that specifically degrades the RNA of RNA-DNA hybrids. This is Ribonuclease H from Bordetella avium (strain 197N).